The sequence spans 246 residues: 23S rRNA (guanosine-2'-O-)-methyltransferase RlmB (246 aa).

S-adenosyl-L-methionine-binding residues include G196, I216, and L225.

It belongs to the class IV-like SAM-binding methyltransferase superfamily. RNA methyltransferase TrmH family. RlmB subfamily. In terms of assembly, homodimer.

The protein resides in the cytoplasm. It carries out the reaction guanosine(2251) in 23S rRNA + S-adenosyl-L-methionine = 2'-O-methylguanosine(2251) in 23S rRNA + S-adenosyl-L-homocysteine + H(+). Its function is as follows. Specifically methylates the ribose of guanosine 2251 in 23S rRNA. The chain is 23S rRNA (guanosine-2'-O-)-methyltransferase RlmB from Yersinia pestis.